The following is a 367-amino-acid chain: MGHLIPQTGDEETELGLAAVRLANCAAFPMVFKAAIELGVIDTLYLAARDDVTGSSSFLTPSEIAIRLPTKPSNPEAPALLDRILRLLASYSMVKCQIIDGNRVYKAEPICRYFLKDNVDEELGTLASQLIVTLDTVFLNTWGELKNVVLEGGVAFGRANGGLKLFDYISKDERLSKLFNRTGFSVAVLKKILQVYSGFEGVNVLVDVGGGVGDTLGFVTSKYPNIKGINFDLTCALTQAPSYPNVEHVAGDMFVDVPKGDAILLKRILHDWTDEDCEKILKNCWKALPENGKVIVMEVVTPDEADNRDVISNIAFDMDLLMLTQLSGGKERSRAEYVAMAANSGFPRCNFVCSAYHLWVIELTKQA.

Residues Gly209, Asp232, Asp252, Met253, and Lys266 each coordinate S-adenosyl-L-homocysteine. His270 acts as the Proton acceptor in catalysis.

Belongs to the class I-like SAM-binding methyltransferase superfamily. Cation-independent O-methyltransferase family.

It participates in secondary metabolite biosynthesis. Its function is as follows. Involved in indole glucosinolate biosynthesis. Catalyzes methoxylation reactions of the glucosinolate indole ring. Converts the hydroxy intermediates 4-hydroxy-indol-3-yl-methylglucosinolate (4OH-I3M) and 1-hydroxy-indol-3-yl-methylglucosinolate (1OH-I3M) to 4-methoxy-indol-3-yl-methylglucosinolate (4MO-I3M) and 1-methoxy-indol-3-yl-methylglucosinolate, respectively. This is Indole glucosinolate O-methyltransferase 5 from Arabidopsis thaliana (Mouse-ear cress).